A 997-amino-acid chain; its full sequence is Mannuronan C5-epimerase AlgE2 (997 aa).

7 PbH1 repeats span residues 133-155, 157-179, 180-202, 204-226, 257-279, 280-315, and 320-359; these read DRDVTLERVEIREMSGYGFDPHE, TINLTIRDSVAHDNGLDGFVADF, QIGGVFENNVSYNNDRHGFNIVT, TNDFVLSNNVAYGNGGAGLVVQR, AHDVTLQNAEIYGNGLYGVRVYG, AEDVQILDNYIHDNSQNGSYAEILLQSYDDTAGVSG, and TTGTWIEGNTIVGSANSTYGIQERDDGTDYSSLYANSVSN. Hemolysin-type calcium-binding repeat units lie at residues 388-403, 406-422, 424-439, 557-573, 574-591, 696-711, 713-730, 828-839, 846-862, and 864-880; these read GTAGNDTLGGSDAHET, GLDGNDRLNGGAGNDIL, GGAGRDNLTGGAGADL, GHAGNDTLDGGAGDDIL, VGGAGRDSLTGGAGADVF, GSAGNDSLQGTAADEV, HGGGGRDTLAGGAGADVF, GGDGNDTLSGSS, GGVGNDSLDGGAGNDIL, and GGAGRDTLSGGSGSDIF.

It belongs to the D-mannuronate C5-epimerase family. Ca(2+) serves as cofactor.

The protein resides in the secreted. The catalysed reaction is [(1-&gt;4)-beta-D-mannuronosyl](n) = [alginate](n). Its pathway is glycan biosynthesis; alginate biosynthesis. Inhibited by zinc. Its function is as follows. Converts beta-D-mannuronic acid (M) to alpha-L-guluronic acid (G), producing a polymer with gel-forming capacity, required for the formation of the cyst coat. The chain is Mannuronan C5-epimerase AlgE2 from Azotobacter vinelandii.